We begin with the raw amino-acid sequence, 370 residues long: Tryptophan--tRNA ligase (370 aa).

A 'HIGH' region motif is present at residues 75 to 83 (PSGKMHFGH). The short motif at 255 to 259 (KMSSS) is the 'KMSKS' region element.

It belongs to the class-I aminoacyl-tRNA synthetase family.

It is found in the cytoplasm. The enzyme catalyses tRNA(Trp) + L-tryptophan + ATP = L-tryptophyl-tRNA(Trp) + AMP + diphosphate + H(+). This chain is Tryptophan--tRNA ligase, found in Methanocaldococcus jannaschii (strain ATCC 43067 / DSM 2661 / JAL-1 / JCM 10045 / NBRC 100440) (Methanococcus jannaschii).